The sequence spans 95 residues: Aspartyl/glutamyl-tRNA(Asn/Gln) amidotransferase subunit C (95 aa).

The protein belongs to the GatC family. Heterotrimer of A, B and C subunits.

It catalyses the reaction L-glutamyl-tRNA(Gln) + L-glutamine + ATP + H2O = L-glutaminyl-tRNA(Gln) + L-glutamate + ADP + phosphate + H(+). The catalysed reaction is L-aspartyl-tRNA(Asn) + L-glutamine + ATP + H2O = L-asparaginyl-tRNA(Asn) + L-glutamate + ADP + phosphate + 2 H(+). In terms of biological role, allows the formation of correctly charged Asn-tRNA(Asn) or Gln-tRNA(Gln) through the transamidation of misacylated Asp-tRNA(Asn) or Glu-tRNA(Gln) in organisms which lack either or both of asparaginyl-tRNA or glutaminyl-tRNA synthetases. The reaction takes place in the presence of glutamine and ATP through an activated phospho-Asp-tRNA(Asn) or phospho-Glu-tRNA(Gln). In Bradyrhizobium sp. (strain BTAi1 / ATCC BAA-1182), this protein is Aspartyl/glutamyl-tRNA(Asn/Gln) amidotransferase subunit C.